A 221-amino-acid polypeptide reads, in one-letter code: Adenylate kinase (221 aa).

10 to 15 serves as a coordination point for ATP; sequence GAGKGT. The tract at residues 30 to 59 is NMP; that stretch reads STGDIFRQNLRDNTELGKLAKEYMDKGLLV. AMP contacts are provided by residues threonine 31, arginine 36, 57 to 59, 85 to 88, and glutamine 92; these read LLV and GYPR. An LID region spans residues 126 to 163; sequence GRRVCPVCGATYHIKTSPPKVDNVCDKCGSELIQRSDD. Arginine 127 is an ATP binding site. Cysteine 130 and cysteine 133 together coordinate Zn(2+). 136 to 137 contacts ATP; that stretch reads TY. 2 residues coordinate Zn(2+): cysteine 150 and cysteine 153. Residues arginine 160 and arginine 171 each contribute to the AMP site. Lysine 199 serves as a coordination point for ATP.

This sequence belongs to the adenylate kinase family. In terms of assembly, monomer.

The protein resides in the cytoplasm. It carries out the reaction AMP + ATP = 2 ADP. Its pathway is purine metabolism; AMP biosynthesis via salvage pathway; AMP from ADP: step 1/1. Catalyzes the reversible transfer of the terminal phosphate group between ATP and AMP. Plays an important role in cellular energy homeostasis and in adenine nucleotide metabolism. The polypeptide is Adenylate kinase (Caldanaerobacter subterraneus subsp. tengcongensis (strain DSM 15242 / JCM 11007 / NBRC 100824 / MB4) (Thermoanaerobacter tengcongensis)).